The primary structure comprises 655 residues: Sphingomyelin phosphodiesterase 3 (655 aa).

Residues M1–N10 lie on the Cytoplasmic side of the membrane. Positions S11–V31 form an intramembrane region, helical. At D32–T64 the chain is on the cytoplasmic side. S-palmitoyl cysteine attachment occurs at residues C53, C54, and C59. The helical intramembrane region spans P65–W85. At S86–A655 the chain is on the cytoplasmic side. Residue S178 is modified to Phosphoserine. A disordered region spans residues V210–A319. 2 stretches are compositionally biased toward basic and acidic residues: residues Y212–D222 and G248–E257. A compositionally biased stretch (polar residues) spans T279 to R299. The residue at position 291 (S291) is a Phosphoserine. E364 is a Mg(2+) binding site. Residues C397 and C398 are each lipidated (S-palmitoyl cysteine). Residue H639 is the Proton acceptor of the active site.

This sequence belongs to the neutral sphingomyelinase family. The cofactor is Mg(2+). In terms of processing, palmitoylated, palmitoylation-deficient proteins are targeted for lysosomal degradation. As to expression, predominantly expressed in brain.

The protein resides in the golgi apparatus membrane. It is found in the cell membrane. It catalyses the reaction a sphingomyelin + H2O = phosphocholine + an N-acylsphing-4-enine + H(+). The enzyme catalyses N-(15Z-tetracosenoyl)sphing-4-enine-1-phosphocholine + H2O = N-(15Z-tetracosenoyl)-sphing-4-enine + phosphocholine + H(+). The catalysed reaction is N-(tetracosanoyl)-sphing-4-enine-1-phosphocholine + H2O = N-tetracosanoyl-sphing-4-enine + phosphocholine + H(+). It carries out the reaction an N-(acyl)-sphingosylphosphocholine + H2O = an N-acyl-sphingoid base + phosphocholine + H(+). It catalyses the reaction 1-hexadecanoyl-sn-glycero-3-phosphocholine + H2O = 1-hexadecanoyl-sn-glycerol + phosphocholine + H(+). The enzyme catalyses 1-O-octadecyl-sn-glycero-3-phosphocholine + H2O = 1-O-octadecyl-sn-glycerol + phosphocholine + H(+). The catalysed reaction is a sphingosylphosphocholine + H2O = a sphingoid base + phosphocholine + H(+). It carries out the reaction N-(hexadecanoyl)-sphing-4-enine-1-phosphocholine + H2O = N-hexadecanoylsphing-4-enine + phosphocholine + H(+). The protein operates within lipid metabolism; sphingolipid metabolism. Its activity is regulated as follows. Inhibited by nSMase inhibitor GW4869. Binding of anionic phospholipids (APLs) such as phosphatidylserine (PS) and phosphatidic acid (PA) increases enzymatic activity. Functionally, catalyzes the hydrolysis of sphingomyelin to form ceramide and phosphocholine. Ceramide mediates numerous cellular functions, such as apoptosis and growth arrest, and is capable of regulating these 2 cellular events independently. Also hydrolyzes sphingosylphosphocholine. Regulates the cell cycle by acting as a growth suppressor in confluent cells. Probably acts as a regulator of postnatal development and participates in bone and dentin mineralization. Binds to anionic phospholipids (APLs) such as phosphatidylserine (PS) and phosphatidic acid (PA) that modulate enzymatic activity and subcellular location. May be involved in IL-1-beta-induced JNK activation in hepatocytes. May act as a mediator in transcriptional regulation of NOS2/iNOS via the NF-kappa-B activation under inflammatory conditions. The chain is Sphingomyelin phosphodiesterase 3 from Homo sapiens (Human).